The chain runs to 155 residues: Large ribosomal subunit protein uL15 (155 aa).

Residues 1 to 13 (MKLNELRDCEGAT) are compositionally biased toward basic and acidic residues. The segment at 1-47 (MKLNELRDCEGATKNRKRIGRGIGSGTGKTGGRGVKGQKSRSGVSLN) is disordered. Gly residues predominate over residues 21 to 35 (RGIGSGTGKTGGRGV).

Belongs to the universal ribosomal protein uL15 family. In terms of assembly, part of the 50S ribosomal subunit.

Binds to the 23S rRNA. The chain is Large ribosomal subunit protein uL15 from Bartonella tribocorum (strain CIP 105476 / IBS 506).